The primary structure comprises 615 residues: DNA mismatch repair protein MutL (615 aa).

The interval 363–397 is disordered; sequence FAEPAAREPVAPRYTPAPASGSRPAAPWPNAQPGY. The segment covering 364 to 391 has biased composition (low complexity); sequence AEPAAREPVAPRYTPAPASGSRPAAPWP.

The protein belongs to the DNA mismatch repair MutL/HexB family.

Functionally, this protein is involved in the repair of mismatches in DNA. It is required for dam-dependent methyl-directed DNA mismatch repair. May act as a 'molecular matchmaker', a protein that promotes the formation of a stable complex between two or more DNA-binding proteins in an ATP-dependent manner without itself being part of a final effector complex. In Escherichia coli (strain K12 / MC4100 / BW2952), this protein is DNA mismatch repair protein MutL.